A 69-amino-acid chain; its full sequence is Cytochrome c oxidase subunit 8A, mitochondrial (69 aa).

The transit peptide at 1 to 25 directs the protein to the mitochondrion; that stretch reads MSVLTSLLLRGLTGSARRLPVPRAK. Topologically, residues 26–36 are mitochondrial matrix; it reads VHSMPPEEELG. The helical transmembrane segment at 37–60 threads the bilayer; sequence IMEKAIGLTFCFVSLFLPAGWILS. Residues 61 to 69 are Mitochondrial intermembrane-facing; it reads HLEDYKRPE.

Belongs to the cytochrome c oxidase VIII family. As to quaternary structure, component of the cytochrome c oxidase (complex IV, CIV), a multisubunit enzyme composed of 14 subunits. The complex is composed of a catalytic core of 3 subunits MT-CO1, MT-CO2 and MT-CO3, encoded in the mitochondrial DNA, and 11 supernumerary subunits COX4I, COX5A, COX5B, COX6A, COX6B, COX6C, COX7A, COX7B, COX7C, COX8 and NDUFA4, which are encoded in the nuclear genome. The complex exists as a monomer or a dimer and forms supercomplexes (SCs) in the inner mitochondrial membrane with NADH-ubiquinone oxidoreductase (complex I, CI) and ubiquinol-cytochrome c oxidoreductase (cytochrome b-c1 complex, complex III, CIII), resulting in different assemblies (supercomplex SCI(1)III(2)IV(1) and megacomplex MCI(2)III(2)IV(2)). In response to mitochondrial stress, the precursor protein is ubiquitinated by the SIFI complex in the cytoplasm before mitochondrial import, leading to its degradation. Within the SIFI complex, UBR4 initiates ubiquitin chain that are further elongated or branched by KCMF1.

It localises to the mitochondrion inner membrane. Its pathway is energy metabolism; oxidative phosphorylation. In terms of biological role, component of the cytochrome c oxidase, the last enzyme in the mitochondrial electron transport chain which drives oxidative phosphorylation. The respiratory chain contains 3 multisubunit complexes succinate dehydrogenase (complex II, CII), ubiquinol-cytochrome c oxidoreductase (cytochrome b-c1 complex, complex III, CIII) and cytochrome c oxidase (complex IV, CIV), that cooperate to transfer electrons derived from NADH and succinate to molecular oxygen, creating an electrochemical gradient over the inner membrane that drives transmembrane transport and the ATP synthase. Cytochrome c oxidase is the component of the respiratory chain that catalyzes the reduction of oxygen to water. Electrons originating from reduced cytochrome c in the intermembrane space (IMS) are transferred via the dinuclear copper A center (CU(A)) of subunit 2 and heme A of subunit 1 to the active site in subunit 1, a binuclear center (BNC) formed by heme A3 and copper B (CU(B)). The BNC reduces molecular oxygen to 2 water molecules using 4 electrons from cytochrome c in the IMS and 4 protons from the mitochondrial matrix. This chain is Cytochrome c oxidase subunit 8A, mitochondrial (COX8A), found in Macaca fascicularis (Crab-eating macaque).